Reading from the N-terminus, the 3011-residue chain is Chromodomain-helicase-DNA-binding protein 7 (3011 aa).

5 disordered regions span residues 90-146 (ISNA…SMWG), 159-189 (PYQQ…QHMQ), 202-422 (MQQH…GSAG), 502-806 (QQLP…VEKI), and 941-960 (PEME…SESS). The segment covering 159–168 (PYQQQQQQPQ) has biased composition (low complexity). Over residues 169-179 (PTQPPQAPSGP) the composition is skewed to pro residues. The segment covering 203 to 215 (QQHGQPQQQRMNQ) has biased composition (low complexity). 4 stretches are compositionally biased toward polar residues: residues 216 to 227 (FSQGQEGLNQGN), 241 to 258 (VPQQ…SVQQ), 291 to 347 (QTLN…NQSV), and 374 to 393 (GSLN…QGTY). The span at 502–516 (QQLPSQQQSFQQQMP) shows a compositional bias: low complexity. Polar residues-rich tracts occupy residues 576–586 (TQVSGPNTQLV) and 630–641 (DSQNLSRNSVDC). Composition is skewed to basic and acidic residues over residues 655 to 684 (KKEP…EPKE) and 718 to 730 (KGKE…DLDK). The span at 747-759 (QKRRSSRQVKRKR) shows a compositional bias: basic residues. Positions 760–770 (YTEDLEFKISD) are enriched in basic and acidic residues. Positions 783 to 795 (SPSNTSQSEQQES) are enriched in polar residues. 2 consecutive Chromo domains span residues 801–868 (PVVE…GQNK) and 883–948 (VEID…RVER). The region spanning 981 to 1155 (LFNWYNTRNC…FSLLHFLEPG (175 aa)) is the Helicase ATP-binding domain. 994 to 1001 (DEMGLGKT) is a binding site for ATP. The DEAH box signature appears at 1106 to 1109 (DEAH). Residues 1295 to 1465 (LIDKLLPKLK…LSKKEIEDLL (171 aa)) form the Helicase C-terminal domain. Disordered stretches follow at residues 1577 to 1602 (FSDL…SQGY), 1836 to 1869 (GTDM…KDEI), and 2136 to 2291 (GTGN…GFYM). Positions 1585–1597 (EEKPSTKPRRPQD) are enriched in basic and acidic residues. A compositionally biased stretch (acidic residues) spans 1845–1856 (DGGEFDREDEDP). A compositionally biased stretch (basic and acidic residues) spans 1857-1867 (EYKPTRTPFKD). Over residues 2136 to 2145 (GTGNANTVSS) the composition is skewed to polar residues. Basic and acidic residues-rich tracts occupy residues 2166 to 2207 (QEEK…KQDC) and 2218 to 2238 (CELK…SEKG). The span at 2239-2253 (SEEDEEEKLDDDDKS) shows a compositional bias: acidic residues. Residues 2403–2433 (RRRRRKIEIEAERAAKRRNLMEMVAQLRESQ) are a coiled coil. S2561 is modified (phosphoserine). Disordered stretches follow at residues 2825 to 2900 (TTGN…LPTN) and 2946 to 3011 (GSNE…ENDE). A compositionally biased stretch (basic and acidic residues) spans 2841 to 2851 (GASKAEEKKNE). Over residues 2864-2877 (DTVSATDSANGSVS) the composition is skewed to polar residues. A compositionally biased stretch (low complexity) spans 2878–2893 (AATAATTATATTTTTT). The segment covering 2948-2964 (NEEKATDKTEGTAFKDE) has biased composition (basic and acidic residues). Acidic residues-rich tracts occupy residues 2965–2974 (ENLEGSDAEE) and 2984–3011 (ILED…ENDE).

The protein belongs to the SNF2/RAD54 helicase family. In terms of tissue distribution, expressed in the neural epithelium, otic placodes, optic placodes, branchial arches, and the olfactory placodes,.

The protein localises to the nucleus. It carries out the reaction ATP + H2O = ADP + phosphate + H(+). ATP-dependent chromatin-remodeling factor, slides nucleosomes along DNA; nucleosome sliding requires ATP.Probable transcription regulator. Maybe involved in the in 45S precursor rRNA production. In Gallus gallus (Chicken), this protein is Chromodomain-helicase-DNA-binding protein 7 (CHD7).